Reading from the N-terminus, the 294-residue chain is Ribosomal RNA small subunit methyltransferase A (294 aa).

S-adenosyl-L-methionine contacts are provided by Asn-31, Leu-33, Gly-58, Glu-79, Asp-111, and Asn-136.

This sequence belongs to the class I-like SAM-binding methyltransferase superfamily. rRNA adenine N(6)-methyltransferase family. RsmA subfamily.

It localises to the cytoplasm. It carries out the reaction adenosine(1518)/adenosine(1519) in 16S rRNA + 4 S-adenosyl-L-methionine = N(6)-dimethyladenosine(1518)/N(6)-dimethyladenosine(1519) in 16S rRNA + 4 S-adenosyl-L-homocysteine + 4 H(+). Specifically dimethylates two adjacent adenosines (A1518 and A1519) in the loop of a conserved hairpin near the 3'-end of 16S rRNA in the 30S particle. May play a critical role in biogenesis of 30S subunits. The protein is Ribosomal RNA small subunit methyltransferase A of Lactobacillus acidophilus (strain ATCC 700396 / NCK56 / N2 / NCFM).